A 422-amino-acid polypeptide reads, in one-letter code: S-adenosylmethionine synthase (422 aa).

H16 contacts ATP. D18 contacts Mg(2+). E44 is a K(+) binding site. L-methionine contacts are provided by E57 and Q100. Positions 100–110 are flexible loop; that stretch reads QSPDISQGVSA. Residues 175–177, 251–252, D260, 266–267, A283, and K287 each bind ATP; these read DGK, KF, and RK. D260 is a binding site for L-methionine. K291 is a binding site for L-methionine.

The protein belongs to the AdoMet synthase family. Homotetramer; dimer of dimers. It depends on Mg(2+) as a cofactor. K(+) is required as a cofactor.

Its subcellular location is the cytoplasm. The enzyme catalyses L-methionine + ATP + H2O = S-adenosyl-L-methionine + phosphate + diphosphate. It participates in amino-acid biosynthesis; S-adenosyl-L-methionine biosynthesis; S-adenosyl-L-methionine from L-methionine: step 1/1. Functionally, catalyzes the formation of S-adenosylmethionine (AdoMet) from methionine and ATP. The overall synthetic reaction is composed of two sequential steps, AdoMet formation and the subsequent tripolyphosphate hydrolysis which occurs prior to release of AdoMet from the enzyme. This is S-adenosylmethionine synthase from Rippkaea orientalis (strain PCC 8801 / RF-1) (Cyanothece sp. (strain PCC 8801)).